The sequence spans 519 residues: Galactokinase (519 aa).

Alpha-D-galactose is bound by residues Arg47, Glu53, His54, and Asp56. Residues Gly159, Gly161, Ser163, and Ser164 each coordinate ATP. An alpha-D-galactose-binding site is contributed by Asp209. Asp209 (proton acceptor) is an active-site residue. ATP-binding residues include Asn257 and Lys258. Residue Tyr266 participates in alpha-D-galactose binding.

This sequence belongs to the GHMP kinase family. GalK subfamily.

The enzyme catalyses alpha-D-galactose + ATP = alpha-D-galactose 1-phosphate + ADP + H(+). It participates in carbohydrate metabolism; galactose metabolism. Galactokinase is a key enzyme in the galactose metabolism where it catalyzes the conversion of alpha-D-galactose to galactose 1-phosphate. Can also induce the transcription of the gal genes in response to the organism being challenged with galactose as the sole source of carbon. In Schizosaccharomyces pombe (strain 972 / ATCC 24843) (Fission yeast), this protein is Galactokinase (gal1).